The chain runs to 374 residues: S-adenosylmethionine:tRNA ribosyltransferase-isomerase (374 aa).

This sequence belongs to the QueA family. Monomer.

The protein localises to the cytoplasm. The catalysed reaction is 7-aminomethyl-7-carbaguanosine(34) in tRNA + S-adenosyl-L-methionine = epoxyqueuosine(34) in tRNA + adenine + L-methionine + 2 H(+). It functions in the pathway tRNA modification; tRNA-queuosine biosynthesis. Functionally, transfers and isomerizes the ribose moiety from AdoMet to the 7-aminomethyl group of 7-deazaguanine (preQ1-tRNA) to give epoxyqueuosine (oQ-tRNA). The polypeptide is S-adenosylmethionine:tRNA ribosyltransferase-isomerase (Prochlorococcus marinus (strain AS9601)).